The sequence spans 375 residues: 23S rRNA (uracil(747)-C(5))-methyltransferase RlmC (375 aa).

[4Fe-4S] cluster is bound by residues Cys-3, Cys-11, Cys-14, and Cys-87. Residues Gln-212, Phe-241, Glu-262, and Asn-307 each coordinate S-adenosyl-L-methionine. Cys-334 acts as the Nucleophile in catalysis.

Belongs to the class I-like SAM-binding methyltransferase superfamily. RNA M5U methyltransferase family. RlmC subfamily.

The catalysed reaction is uridine(747) in 23S rRNA + S-adenosyl-L-methionine = 5-methyluridine(747) in 23S rRNA + S-adenosyl-L-homocysteine + H(+). Its function is as follows. Catalyzes the formation of 5-methyl-uridine at position 747 (m5U747) in 23S rRNA. This is 23S rRNA (uracil(747)-C(5))-methyltransferase RlmC from Escherichia fergusonii (strain ATCC 35469 / DSM 13698 / CCUG 18766 / IAM 14443 / JCM 21226 / LMG 7866 / NBRC 102419 / NCTC 12128 / CDC 0568-73).